Here is a 262-residue protein sequence, read N- to C-terminus: MTTKVRFTVAYDGTGFCGWQKQKPEDQISVAQVIEEALSKVFNEKITLFASGRTDAGVHALNQVCHFSTHRKIDPNKKWDLCWALNSHLPPSIVAKKAWIAPDDFHATLSATHKTYRYLIVNKPRPSAHLNRYADWVRLPIDIEHLQESSKYLLGNQDFKSFQSVGTPVPDTVREIYKADWEWRKPGVMQFTITGSGFLKQMVRNIVGTSLFLERKGLDPSKMQEIIAAQDRMKAGPPAPAQGLYLMKVYYPQDLDNRCLEL.

Asp-55 acts as the Nucleophile in catalysis. Tyr-116 is a substrate binding site.

Belongs to the tRNA pseudouridine synthase TruA family. Homodimer.

The catalysed reaction is uridine(38/39/40) in tRNA = pseudouridine(38/39/40) in tRNA. Its function is as follows. Formation of pseudouridine at positions 38, 39 and 40 in the anticodon stem and loop of transfer RNAs. In Bdellovibrio bacteriovorus (strain ATCC 15356 / DSM 50701 / NCIMB 9529 / HD100), this protein is tRNA pseudouridine synthase A.